Consider the following 110-residue polypeptide: Putative UPF0377 protein YKL223W (110 aa).

Belongs to the UPF0377 family.

The protein is Putative UPF0377 protein YKL223W of Saccharomyces cerevisiae (strain ATCC 204508 / S288c) (Baker's yeast).